The following is a 332-amino-acid chain: Super small secreted glycoprotein (332 aa).

Positions 1–33 (MGSGYQLLQLPRERFRKTSFLVWVIILFQRAIS) are cleaved as a signal peptide. N-linked (GlcNAc...) asparagine; by host glycosylation is present at Asn-41. Intrachain disulfides connect Cys-109–Cys-136 and Cys-122–Cys-148. N-linked (GlcNAc...) asparagine; by host glycans are attached at residues Asn-205, Asn-229, Asn-239, Asn-258, and Asn-269.

The protein belongs to the filoviruses glycoprotein family.

Its subcellular location is the secreted. In Reston ebolavirus (strain Reston-89) (REBOV), this protein is Super small secreted glycoprotein (GP).